Reading from the N-terminus, the 165-residue chain is Phosphopantetheine adenylyltransferase (165 aa).

Ser-10 is a substrate binding site. Residues 10-11 (SF) and His-18 each bind ATP. Residues Lys-42, Thr-79, and Arg-93 each contribute to the substrate site. ATP is bound by residues 94–96 (GLR), Glu-104, and 129–135 (VRPITAT).

The protein belongs to the bacterial CoaD family. In terms of assembly, homohexamer. The cofactor is Mg(2+).

It localises to the cytoplasm. The catalysed reaction is (R)-4'-phosphopantetheine + ATP + H(+) = 3'-dephospho-CoA + diphosphate. It functions in the pathway cofactor biosynthesis; coenzyme A biosynthesis; CoA from (R)-pantothenate: step 4/5. In terms of biological role, reversibly transfers an adenylyl group from ATP to 4'-phosphopantetheine, yielding dephospho-CoA (dPCoA) and pyrophosphate. The sequence is that of Phosphopantetheine adenylyltransferase from Rhodopseudomonas palustris (strain BisB5).